Here is a 566-residue protein sequence, read N- to C-terminus: Proline--tRNA ligase (566 aa).

This sequence belongs to the class-II aminoacyl-tRNA synthetase family. ProS type 1 subfamily. Homodimer.

The protein resides in the cytoplasm. The enzyme catalyses tRNA(Pro) + L-proline + ATP = L-prolyl-tRNA(Pro) + AMP + diphosphate. Catalyzes the attachment of proline to tRNA(Pro) in a two-step reaction: proline is first activated by ATP to form Pro-AMP and then transferred to the acceptor end of tRNA(Pro). As ProRS can inadvertently accommodate and process non-cognate amino acids such as alanine and cysteine, to avoid such errors it has two additional distinct editing activities against alanine. One activity is designated as 'pretransfer' editing and involves the tRNA(Pro)-independent hydrolysis of activated Ala-AMP. The other activity is designated 'posttransfer' editing and involves deacylation of mischarged Ala-tRNA(Pro). The misacylated Cys-tRNA(Pro) is not edited by ProRS. The sequence is that of Proline--tRNA ligase from Staphylococcus haemolyticus (strain JCSC1435).